A 1040-amino-acid polypeptide reads, in one-letter code: Multidrug resistance protein MdtB (1040 aa).

Transmembrane regions (helical) follow at residues Phe16–Ile36, Leu347–Ala367, Ile369–Leu389, Leu396–Ile416, Ile440–Phe460, Phe472–Pro492, Trp537–Ile557, Leu863–Val883, Phe888–Ala908, Ile911–Val931, Ile968–Val988, and Ile998–Ile1018.

It belongs to the resistance-nodulation-cell division (RND) (TC 2.A.6) family. MdtB subfamily. In terms of assembly, part of a tripartite efflux system composed of MdtA, MdtB and MdtC. MdtB forms a heteromultimer with MdtC.

The protein resides in the cell inner membrane. The protein is Multidrug resistance protein MdtB of Cronobacter sakazakii (strain ATCC BAA-894) (Enterobacter sakazakii).